Reading from the N-terminus, the 524-residue chain is Apoptosis inhibitor 5-A (524 aa).

Residues M1 to F360 are ARM-like and Heat-like helical repeats. The tract at residues T440–Y524 is disordered. A Nuclear localization signal motif is present at residues K455–R476. Positions G503–G516 are enriched in gly residues.

The protein belongs to the API5 family. As to quaternary structure, monomer.

It is found in the nucleus. In terms of biological role, may be an antiapoptotic factor. The protein is Apoptosis inhibitor 5-A (api5-a) of Xenopus laevis (African clawed frog).